The sequence spans 667 residues: Protein-glutamine gamma-glutamyltransferase 4 (667 aa).

N-linked (GlcNAc...) asparagine glycans are attached at residues Asn-151, Asn-220, and Asn-227. Active-site residues include Cys-256, His-315, and Asp-338. Ca(2+) is bound by residues Asn-378 and Asp-380. The N-linked (GlcNAc...) asparagine glycan is linked to Asn-408. Positions 430 and 435 each coordinate Ca(2+). Residues 430–449 (EGSPEERKAMEKASGKRPDD) are disordered. Asn-472 and Asn-488 each carry an N-linked (GlcNAc...) asparagine glycan.

Belongs to the transglutaminase superfamily. Transglutaminase family. In terms of assembly, homodimer. The cofactor is Ca(2+). Post-translationally, the N-terminus is blocked. Probably linked to the cell membrane via a lipid-anchor, possibly a GPI-anchor. In terms of processing, N-glycosylated on 2 Asn residues by a high mannose oligosaccharide consisting of five mannose residues and a fucosylated biantennary complex glycan. Expressed in the coagulating gland, the dorsal part of the prostate and in semen (at protein level). Expressed at low levels in the lateral prostate and seminal vesicle. Not expressed in the epididymis, kidney, liver, serum, sperm plug, testes and ventral prostate.

It is found in the secreted. The protein resides in the cell membrane. It catalyses the reaction L-glutaminyl-[protein] + L-lysyl-[protein] = [protein]-L-lysyl-N(6)-5-L-glutamyl-[protein] + NH4(+). In terms of biological role, associated with the mammalian reproductive process. Plays an important role in the formation of the seminal coagulum through the cross-linking of specific proteins present in the seminal plasma. Transglutaminase is also required to stabilize the copulatory plug. The polypeptide is Protein-glutamine gamma-glutamyltransferase 4 (Tgm4) (Rattus norvegicus (Rat)).